The sequence spans 72 residues: DNA-directed RNA polymerase subunit omega (72 aa).

It belongs to the RNA polymerase subunit omega family. As to quaternary structure, the RNAP catalytic core consists of 2 alpha, 1 beta, 1 beta' and 1 omega subunit. When a sigma factor is associated with the core the holoenzyme is formed, which can initiate transcription.

The enzyme catalyses RNA(n) + a ribonucleoside 5'-triphosphate = RNA(n+1) + diphosphate. Its function is as follows. Promotes RNA polymerase assembly. Latches the N- and C-terminal regions of the beta' subunit thereby facilitating its interaction with the beta and alpha subunits. The chain is DNA-directed RNA polymerase subunit omega from Francisella philomiragia subsp. philomiragia (strain ATCC 25017 / CCUG 19701 / FSC 153 / O#319-036).